Consider the following 895-residue polypeptide: Histone-lysine N-methyltransferase EZ3 (895 aa).

Low complexity predominate over residues 1 to 13 (MASSSKASDSSSQ). Disordered stretches follow at residues 1–30 (MASS…APAS) and 396–446 (SSVS…PGKR). The segment covering 396–422 (SSVSAEESTTPPSADTSETENASSDMP) has biased composition (polar residues). The span at 427 to 436 (RKYKISKRGP) shows a compositional bias: basic residues. In terms of domain architecture, SANT spans 528–578 (TLSCWSALERDLYLKGIEIFGKNSCLIARNLLSGMKTCMEVANYMYNNGAA). Residues 628 to 732 (AGHPTVRKRI…SLGEPPARGD (105 aa)) enclose the CXC domain. The 116-residue stretch at 747 to 862 (QRILLGRSDV…ASEELFYDYR (116 aa)) folds into the SET domain. The disordered stretch occupies residues 870-895 (AWARRPEGSKKDEASVSHHRAHKVAR). Residues 873–885 (RRPEGSKKDEASV) show a composition bias toward basic and acidic residues. The span at 886-895 (SHHRAHKVAR) shows a compositional bias: basic residues.

It belongs to the class V-like SAM-binding methyltransferase superfamily. Histone-lysine methyltransferase family. EZ subfamily. Widely expressed.

It localises to the nucleus. The catalysed reaction is L-lysyl(27)-[histone H3] + 3 S-adenosyl-L-methionine = N(6),N(6),N(6)-trimethyl-L-lysyl(27)-[histone H3] + 3 S-adenosyl-L-homocysteine + 3 H(+). Its function is as follows. Polycomb group (PcG) protein. Catalytic subunit of some PcG multiprotein complex, which methylates 'Lys-27' of histone H3, leading to transcriptional repression of the affected target genes. PcG proteins are not required to initiate repression, but to maintain it during later stages of development. The polypeptide is Histone-lysine N-methyltransferase EZ3 (EZ3) (Zea mays (Maize)).